A 72-amino-acid polypeptide reads, in one-letter code: Large ribosomal subunit protein eL40 (72 aa).

This sequence belongs to the eukaryotic ribosomal protein eL40 family.

In Nicotiana tabacum (Common tobacco), this protein is Large ribosomal subunit protein eL40.